A 33-amino-acid polypeptide reads, in one-letter code: Cytochrome b6-f complex subunit 7 (33 aa).

A helical membrane pass occupies residues 5 to 25; it reads IFNTAVITFTLVLVGLGAGYL.

Belongs to the PetM family. The 4 large subunits of the cytochrome b6-f complex are cytochrome b6, subunit IV (17 kDa polypeptide, PetD), cytochrome f and the Rieske protein, while the 4 small subunits are PetG, PetL, PetM and PetN. The complex functions as a dimer.

Its subcellular location is the cellular thylakoid membrane. Its function is as follows. Component of the cytochrome b6-f complex, which mediates electron transfer between photosystem II (PSII) and photosystem I (PSI), cyclic electron flow around PSI, and state transitions. The protein is Cytochrome b6-f complex subunit 7 of Thermosynechococcus vestitus (strain NIES-2133 / IAM M-273 / BP-1).